We begin with the raw amino-acid sequence, 423 residues long: Dihydroorotase-like protein (423 aa).

The protein belongs to the metallo-dependent hydrolases superfamily. DHOase family. PyrC' subfamily. As to quaternary structure, heterododecamer of 6 active PyrB subunits and 6 non-catalytic PyrC' subunits.

Its function is as follows. Non-functional DHOase. The sequence is that of Dihydroorotase-like protein (pyrC') from Pseudomonas aeruginosa (strain ATCC 15692 / DSM 22644 / CIP 104116 / JCM 14847 / LMG 12228 / 1C / PRS 101 / PAO1).